A 132-amino-acid polypeptide reads, in one-letter code: Small ribosomal subunit protein uS9 (132 aa).

The interval 104–132 (GYLTRDPRMKERKKYGLRKARRAPQFSKR) is disordered. Positions 113–132 (KERKKYGLRKARRAPQFSKR) are enriched in basic residues.

This sequence belongs to the universal ribosomal protein uS9 family.

The polypeptide is Small ribosomal subunit protein uS9 (Natranaerobius thermophilus (strain ATCC BAA-1301 / DSM 18059 / JW/NM-WN-LF)).